A 444-amino-acid chain; its full sequence is tRNA modification GTPase MnmE (444 aa).

(6S)-5-formyl-5,6,7,8-tetrahydrofolate is bound by residues Arg22, Glu79, and Arg118. The TrmE-type G domain maps to 214 to 368 (GMQVVLAGPP…LRDHLKSVMG (155 aa)). Residue Asn224 participates in K(+) binding. Residues 224 to 229 (NAGKSS), 243 to 249 (TEVPGTT), and 268 to 271 (DTAG) each bind GTP. Mg(2+) is bound at residue Ser228. K(+) contacts are provided by Thr243, Val245, and Thr248. Position 249 (Thr249) interacts with Mg(2+). Lys444 contributes to the (6S)-5-formyl-5,6,7,8-tetrahydrofolate binding site.

It belongs to the TRAFAC class TrmE-Era-EngA-EngB-Septin-like GTPase superfamily. TrmE GTPase family. In terms of assembly, homodimer. Heterotetramer of two MnmE and two MnmG subunits. The cofactor is K(+).

The protein resides in the cytoplasm. In terms of biological role, exhibits a very high intrinsic GTPase hydrolysis rate. Involved in the addition of a carboxymethylaminomethyl (cmnm) group at the wobble position (U34) of certain tRNAs, forming tRNA-cmnm(5)s(2)U34. This is tRNA modification GTPase MnmE from Alkalilimnicola ehrlichii (strain ATCC BAA-1101 / DSM 17681 / MLHE-1).